The chain runs to 100 residues: Urease subunit gamma (100 aa).

It belongs to the urease gamma subunit family. As to quaternary structure, heterotrimer of UreA (gamma), UreB (beta) and UreC (alpha) subunits. Three heterotrimers associate to form the active enzyme.

The protein resides in the cytoplasm. It carries out the reaction urea + 2 H2O + H(+) = hydrogencarbonate + 2 NH4(+). It participates in nitrogen metabolism; urea degradation; CO(2) and NH(3) from urea (urease route): step 1/1. This is Urease subunit gamma from Burkholderia cenocepacia (strain ATCC BAA-245 / DSM 16553 / LMG 16656 / NCTC 13227 / J2315 / CF5610) (Burkholderia cepacia (strain J2315)).